The sequence spans 838 residues: E3 ubiquitin-protein ligase RNF19A (838 aa).

The disordered stretch occupies residues 41-61 (DRDLQSSASSVSLPSVKKAPK). Over residues 46–57 (SSASSVSLPSVK) the composition is skewed to low complexity. Residues 128-351 (DFIECPLCLL…LSPSGCTFWG (224 aa)) form a TRIAD supradomain region. Positions 132, 135, 150, 152, 155, 158, 176, 179, 219, 224, 241, 246, 251, 254, 259, 264, 301, and 304 each coordinate Zn(2+). The segment at 132 to 179 (CPLCLLRHSKDRFPDIMTCHHRSCVDCLRQYLRIEISESRVNISCPEC) adopts an RING-type 1 zinc-finger fold. An IBR-type zinc finger spans residues 199 to 264 (EKYEEFMLRR…KQIWHPNQTC (66 aa)). The RING-type 2; atypical zinc finger occupies 301–332 (CPRCAAYIIKMNDGSCNHMTCAVCGCEFCWLC). Cys-316 is a catalytic residue. The Zn(2+) site is built by Cys-321, Cys-324, Cys-329, Cys-332, His-340, and Cys-347. Helical transmembrane passes span 368–388 (LVGA…AMII) and 424–444 (VIVS…IMLA). Disordered regions lie at residues 622–685 (SKPS…GNMK) and 700–721 (QQST…PSVA). Residues 630–662 (NSGSSSVDDGSATRSHAGGSSSGLPEGKSSATK) show a composition bias toward polar residues. Residue Ser-631 is modified to Phosphoserine. The interaction with CASR stretch occupies residues 660 to 838 (ATKWSKEATA…ELKVAIQTEI (179 aa)). Residues 671 to 683 (KKSKSGKLRKKGN) are compositionally biased toward basic residues. Over residues 700–717 (QQSTNSSEFEAPSLSDSM) the composition is skewed to polar residues.

This sequence belongs to the RBR family. RNF19 subfamily. Interacts with UBE2L3 and UBE2L6. Interacts with transcription factor Sp1. Interacts with VCP, CASR, SNCAIP and with some SOD1 variants which cause amyotrophic lateral sclerosis, but not with wild-type SOD1. In terms of tissue distribution, widely expressed, with highest levels in heart. Ubiquitously expressed in the central nervous system.

The protein localises to the membrane. It localises to the cytoplasm. The protein resides in the cytoskeleton. It is found in the microtubule organizing center. Its subcellular location is the centrosome. It catalyses the reaction [E2 ubiquitin-conjugating enzyme]-S-ubiquitinyl-L-cysteine + [acceptor protein]-L-lysine = [E2 ubiquitin-conjugating enzyme]-L-cysteine + [acceptor protein]-N(6)-ubiquitinyl-L-lysine.. Its pathway is protein modification; protein ubiquitination. Its function is as follows. E3 ubiquitin-protein ligase which accepts ubiquitin from E2 ubiquitin-conjugating enzymes UBE2L3 and UBE2L6 in the form of a thioester and then directly transfers the ubiquitin to targeted substrates, such as SNCAIP or CASR. Specifically ubiquitinates pathogenic SOD1 variants, which leads to their proteasomal degradation and to neuronal protection. The sequence is that of E3 ubiquitin-protein ligase RNF19A (RNF19A) from Homo sapiens (Human).